Consider the following 410-residue polypeptide: Aspartate aminotransferase (410 aa).

The L-aspartate site is built by Gly-47, Trp-135, and Asn-185. The residue at position 249 (Lys-249) is an N6-(pyridoxal phosphate)lysine. Position 385 (Arg-385) interacts with L-aspartate.

The protein belongs to the class-I pyridoxal-phosphate-dependent aminotransferase family. Homodimer. Requires pyridoxal 5'-phosphate as cofactor.

The protein localises to the cytoplasm. The catalysed reaction is L-aspartate + 2-oxoglutarate = oxaloacetate + L-glutamate. Its function is as follows. Catalyzes the reversible conversion of aspartate and 2-oxoglutarate to glutamate and oxaloacetate. The protein is Aspartate aminotransferase of Rhizobium meliloti (Ensifer meliloti).